The following is a 568-amino-acid chain: Sentrin-specific protease 3 (568 aa).

A disordered region spans residues 1–119 (MKETIQGTGS…PSHRKTCSQR (119 aa)). 3 positions are modified to phosphoserine: serine 52, serine 71, and serine 73. Residues 72-87 (ASEEEEEEEEEDEEEV) are compositionally biased toward acidic residues. The span at 106–119 (RALRPSHRKTCSQR) shows a compositional bias: basic residues. 2 consecutive short sequence motifs (nuclear localization signal) follow at residues 119 to 122 (RRRR) and 147 to 153 (RHRGRRR). The tract at residues 155-174 (LAHPKNHLSPQEGGATPQVP) is disordered. Serine 163 is modified (phosphoserine). Phosphothreonine is present on threonine 170. A phosphoserine mark is found at serine 175, serine 182, serine 206, and serine 226. Residues 380-537 (HVLTMDDLGT…AFVLQYCKHL (158 aa)) are protease. Catalysis depends on residues histidine 459 and aspartate 476. Cysteine 526 serves as the catalytic Nucleophile.

This sequence belongs to the peptidase C48 family. In terms of assembly, component of some MLL1/MLL complex, at least composed of the core components KMT2A/MLL1, ASH2L, HCFC1/HCF1, WDR5 and RBBP5, as well as the facultative components BACC1, CHD8, E2F6, HSP70, INO80C, KANSL1, LAS1L, MAX, MCRS1, MGA, MYST1/MOF, PELP1, PHF20, PRP31, RING2, RUVB1/TIP49A, RUVB2/TIP49B, SENP3, TAF1, TAF4, TAF6, TAF7, TAF9 and TEX10. Interacts with EP300, NPM1 and CDCA8. Component of the 5FMC complex, at least composed of PELP1, LAS1L, TEX10, WDR18 and SENP3; the complex interacts with methylated CHTOP and ZNF148. Interacts with NOL9. Interacts with CCAR2.

Its subcellular location is the nucleus. The protein localises to the nucleolus. It is found in the nucleoplasm. It localises to the cytoplasm. On oxidative stress, SENP3 degradation is blocked by inhibition of its ubiquitination, which stabilizes it as it accumulates in the nucleoplasm. Functionally, protease that releases SUMO2 and SUMO3 monomers from sumoylated substrates, but has only weak activity against SUMO1 conjugates. Deconjugates SUMO2 from MEF2D, which increases its transcriptional activation capability. Deconjugates SUMO2 and SUMO3 from CDCA8. Redox sensor that, when redistributed into nucleoplasm, can act as an effector to enhance HIF1A transcriptional activity by desumoylating EP300. Required for rRNA processing through deconjugation of SUMO2 and SUMO3 from nucleophosmin, NPM1. Plays a role in the regulation of sumoylation status of ZNF148. Functions as a component of the Five Friends of Methylated CHTOP (5FMC) complex; the 5FMC complex is recruited to ZNF148 by methylated CHTOP, leading to desumoylation of ZNF148 and subsequent transactivation of ZNF148 target genes. Deconjugates SUMO2 from KAT5. Catalyzes desumoylation of MRE11. In Mus musculus (Mouse), this protein is Sentrin-specific protease 3 (Senp3).